An 82-amino-acid chain; its full sequence is ATP synthase subunit c, chloroplastic (82 aa).

The next 2 membrane-spanning stretches (helical) occupy residues 7-27 and 57-77; these read AASV…PGIG and LAFM…LLFA.

The protein belongs to the ATPase C chain family. F-type ATPases have 2 components, F(1) - the catalytic core - and F(0) - the membrane proton channel. F(1) has five subunits: alpha(3), beta(3), gamma(1), delta(1), epsilon(1). F(0) has four main subunits: a(1), b(1), b'(1) and c(10-14). The alpha and beta chains form an alternating ring which encloses part of the gamma chain. F(1) is attached to F(0) by a central stalk formed by the gamma and epsilon chains, while a peripheral stalk is formed by the delta, b and b' chains.

Its subcellular location is the plastid. It is found in the chloroplast thylakoid membrane. In terms of biological role, f(1)F(0) ATP synthase produces ATP from ADP in the presence of a proton or sodium gradient. F-type ATPases consist of two structural domains, F(1) containing the extramembraneous catalytic core and F(0) containing the membrane proton channel, linked together by a central stalk and a peripheral stalk. During catalysis, ATP synthesis in the catalytic domain of F(1) is coupled via a rotary mechanism of the central stalk subunits to proton translocation. Functionally, key component of the F(0) channel; it plays a direct role in translocation across the membrane. A homomeric c-ring of between 10-14 subunits forms the central stalk rotor element with the F(1) delta and epsilon subunits. In Guillardia theta (Cryptophyte), this protein is ATP synthase subunit c, chloroplastic.